We begin with the raw amino-acid sequence, 332 residues long: MHTLGDIAKTINAKLVGDSNVEITGVASSLYANQTQLTYIINSKYKQTLIHSKAGVVILNKDLLRICPTNALVVDNVYLAFAKATHLFKKQNVCYQGIHPSAKINNAKIAPNCIIGRNVSIGNHCIIASNVVIEDNVTIGNYALIQPNVSILQGCSIGDNIVISPGVVIGSEGFGNAQDQQKHWHSIAHLGYVVIGNNVSIGANTTIDRGTIEDTQIHNGVRIDNLVHIAHNVIIEQDSAIAATVTIGGSCKLGKRCMVGGGATITSHVNLADDIIITGASTVDKNLSEQGHYTGFTSISKHQKWKKIQVWLLNLDKIVHYLNIKLKKLKEK.

Residue histidine 231 is the Proton acceptor of the active site.

This sequence belongs to the transferase hexapeptide repeat family. LpxD subfamily. In terms of assembly, homotrimer.

It carries out the reaction a UDP-3-O-[(3R)-3-hydroxyacyl]-alpha-D-glucosamine + a (3R)-hydroxyacyl-[ACP] = a UDP-2-N,3-O-bis[(3R)-3-hydroxyacyl]-alpha-D-glucosamine + holo-[ACP] + H(+). Its pathway is bacterial outer membrane biogenesis; LPS lipid A biosynthesis. Functionally, catalyzes the N-acylation of UDP-3-O-acylglucosamine using 3-hydroxyacyl-ACP as the acyl donor. Is involved in the biosynthesis of lipid A, a phosphorylated glycolipid that anchors the lipopolysaccharide to the outer membrane of the cell. In Vesicomyosocius okutanii subsp. Calyptogena okutanii (strain HA), this protein is UDP-3-O-acylglucosamine N-acyltransferase.